The following is a 214-amino-acid chain: Protein PsaE (214 aa).

The N-terminal stretch at 1 to 24 (MSHCVVLNKLESVLIIGDSRYALS) is a signal peptide. Residues 1-94 (MSHCVVLNKL…YKNEGYSYQK (94 aa)) constitute a DNA-binding region (ompR/PhoB-type).

Functionally, required for expression of pH 6 antigen. The protein is Protein PsaE (psaE) of Yersinia pseudotuberculosis serotype I (strain IP32953).